The chain runs to 132 residues: Putative esterase Ta0293 (132 aa).

The protein belongs to the thioesterase PaaI family.

This is Putative esterase Ta0293 from Thermoplasma acidophilum (strain ATCC 25905 / DSM 1728 / JCM 9062 / NBRC 15155 / AMRC-C165).